Reading from the N-terminus, the 416-residue chain is Phosphoglycerate kinase (416 aa).

Substrate is bound by residues 28-30, Arg-44, 65-68, Arg-122, and Arg-162; these read DMN and HQSR. Residues Glu-337 and 362 to 365 contribute to the ATP site; that span reads GGHI.

It belongs to the phosphoglycerate kinase family. As to quaternary structure, monomer.

Its subcellular location is the cytoplasm. It catalyses the reaction (2R)-3-phosphoglycerate + ATP = (2R)-3-phospho-glyceroyl phosphate + ADP. Its pathway is carbohydrate degradation; glycolysis; pyruvate from D-glyceraldehyde 3-phosphate: step 2/5. The protein is Phosphoglycerate kinase of Methanosarcina mazei (strain ATCC BAA-159 / DSM 3647 / Goe1 / Go1 / JCM 11833 / OCM 88) (Methanosarcina frisia).